The following is a 406-amino-acid chain: telomere-associated protein 1 (406 aa).

Over residues Glu20–Asn40 the composition is skewed to basic and acidic residues. The tract at residues Glu20 to Ala46 is disordered. Residues Thr147 to Tyr206 enclose the HTH myb-type domain. A DNA-binding region (H-T-H motif) is located at residues Trp175 to Phe202. One can recognise a Myb-like domain in the interval Val234–Phe288. Residues Thr368–Glu389 form a disordered region.

Its subcellular location is the nucleus. The protein resides in the chromosome. It localises to the telomere. Telomere-binding protein that mediates telomere clustering by promoting formation of head-to-head dimers of DNA molecules through the telomeric tracts. Binds specifically 5'-TTAGTCAGGG-3' repeats in subtelomeric regions. The protein is telomere-associated protein 1 of Yarrowia lipolytica (strain CLIB 122 / E 150) (Yeast).